The sequence spans 160 residues: uncharacterized protein (160 aa).

It is found in the cytoplasm. The protein resides in the nucleus. This is an uncharacterized protein from Schizosaccharomyces pombe (strain 972 / ATCC 24843) (Fission yeast).